The sequence spans 287 residues: Prepilin leader peptidase/N-methyltransferase (287 aa).

Transmembrane regions (helical) follow at residues 10–30 (LGFPAAAGLGLLIGSFLNVVI), 101–121 (ISIQYPLVELLTSILCVASVW), 125–145 (FGWQGFGAIVLSCFLVAMSGI), 177–197 (KPALLGAAVGYVSLWTVWWLF), 226–246 (ILPIILISSLVGAVLGSIWLF), and 253–273 (ATPIPFGPYLAIAGWVVFFWG).

This sequence belongs to the peptidase A24 family.

The protein resides in the cell inner membrane. The catalysed reaction is Typically cleaves a -Gly-|-Phe- bond to release an N-terminal, basic peptide of 5-8 residues from type IV prepilin, and then N-methylates the new N-terminal amino group, the methyl donor being S-adenosyl-L-methionine.. In terms of biological role, plays an essential role in type IV pili and type II pseudopili formation by proteolytically removing the leader sequence from substrate proteins and subsequently monomethylating the alpha-amino group of the newly exposed N-terminal phenylalanine. This chain is Prepilin leader peptidase/N-methyltransferase (xpsO), found in Xanthomonas campestris pv. campestris (strain ATCC 33913 / DSM 3586 / NCPPB 528 / LMG 568 / P 25).